We begin with the raw amino-acid sequence, 150 residues long: U1 small nuclear ribonucleoprotein C (150 aa).

The segment at 4 to 36 (YYCDYCKSYLTHDTMSVRKSHLQGRNHIKFYCD) adopts a Matrin-type zinc-finger fold. Positions 66–132 (SDAKKSNGSS…GLPLPPPAVY (67 aa)) are disordered. A compositionally biased stretch (basic and acidic residues) spans 80-92 (DIDKKENSSDHNK). Positions 103–112 (NDNDDDDDEM) are enriched in acidic residues. The span at 115–130 (LPPPPNLSGLPLPPPA) shows a compositional bias: pro residues.

It belongs to the U1 small nuclear ribonucleoprotein C family. In terms of assembly, U1 snRNP is composed of the 7 core Sm proteins B/B', D1, D2, D3, E, F and G that assemble in a heptameric protein ring on the Sm site of the small nuclear RNA to form the core snRNP, and at least 3 U1 snRNP-specific proteins U1-70K, U1-A and U1-C. U1-C interacts with U1 snRNA and the 5' splice-site region of the pre-mRNA.

It localises to the nucleus. Component of the spliceosomal U1 snRNP, which is essential for recognition of the pre-mRNA 5' splice-site and the subsequent assembly of the spliceosome. U1-C is directly involved in initial 5' splice-site recognition for both constitutive and regulated alternative splicing. The interaction with the 5' splice-site seems to precede base-pairing between the pre-mRNA and the U1 snRNA. Stimulates commitment or early (E) complex formation by stabilizing the base pairing of the 5' end of the U1 snRNA and the 5' splice-site region. This is U1 small nuclear ribonucleoprotein C from Candida albicans (strain SC5314 / ATCC MYA-2876) (Yeast).